The sequence spans 463 residues: Asparagine--tRNA ligase (463 aa).

Belongs to the class-II aminoacyl-tRNA synthetase family. Homodimer.

Its subcellular location is the cytoplasm. It catalyses the reaction tRNA(Asn) + L-asparagine + ATP = L-asparaginyl-tRNA(Asn) + AMP + diphosphate + H(+). The protein is Asparagine--tRNA ligase of Clostridium kluyveri (strain ATCC 8527 / DSM 555 / NBRC 12016 / NCIMB 10680 / K1).